Here is an 872-residue protein sequence, read N- to C-terminus: Probable LRR receptor-like serine/threonine-protein kinase At1g51880 (872 aa).

Positions Met1–Ala23 are cleaved as a signal peptide. Residues Gln24 to Pro513 lie on the Extracellular side of the membrane. N-linked (GlcNAc...) asparagine glycans are attached at residues Asn40, Asn49, Asn96, Asn181, Asn255, Asn268, Asn294, Asn339, and Asn401. 3 LRR repeats span residues Arg411–Thr434, Gln435–Met457, and Leu459–Arg482. Asn464 and Asn472 each carry an N-linked (GlcNAc...) asparagine glycan. A helical transmembrane segment spans residues Ile514–Val534. Residues Arg535–Arg872 lie on the Cytoplasmic side of the membrane. Thr557 carries the phosphothreonine modification. The 273-residue stretch at Asn566–Val838 folds into the Protein kinase domain. ATP-binding positions include Leu572–Val580 and Lys593. At Tyr638 the chain carries Phosphotyrosine. Asp690 serves as the catalytic Proton acceptor. At Ser724 the chain carries Phosphoserine. Thr725 and Thr730 each carry phosphothreonine. Residue Tyr738 is modified to Phosphotyrosine.

This sequence belongs to the protein kinase superfamily. Ser/Thr protein kinase family.

The protein localises to the membrane. It carries out the reaction L-seryl-[protein] + ATP = O-phospho-L-seryl-[protein] + ADP + H(+). It catalyses the reaction L-threonyl-[protein] + ATP = O-phospho-L-threonyl-[protein] + ADP + H(+). In Arabidopsis thaliana (Mouse-ear cress), this protein is Probable LRR receptor-like serine/threonine-protein kinase At1g51880.